We begin with the raw amino-acid sequence, 20 residues long: Pregnancy-associated glycoprotein 57 (20 aa).

The protein belongs to the peptidase A1 family. Glycosylated.

The protein resides in the secreted. This chain is Pregnancy-associated glycoprotein 57, found in Ovis aries (Sheep).